The primary structure comprises 503 residues: Catalase (503 aa).

Positions 1-26 (MAKDDKRLTGLFGHPVSDRENSMTAG) are disordered. Catalysis depends on residues His-56 and Asn-129. A heme-binding site is contributed by Tyr-339.

This sequence belongs to the catalase family. Homodimer. Requires heme as cofactor.

The catalysed reaction is 2 H2O2 = O2 + 2 H2O. Decomposes hydrogen peroxide into water and oxygen; serves to protect cells from the toxic effects of hydrogen peroxide. This chain is Catalase (katA), found in Staphylococcus haemolyticus (strain JCSC1435).